The sequence spans 292 residues: 33 kDa chaperonin (292 aa).

2 disulfide bridges follow: Cys230–Cys232 and Cys263–Cys266.

Belongs to the HSP33 family. Post-translationally, under oxidizing conditions two disulfide bonds are formed involving the reactive cysteines. Under reducing conditions zinc is bound to the reactive cysteines and the protein is inactive.

Its subcellular location is the cytoplasm. In terms of biological role, redox regulated molecular chaperone. Protects both thermally unfolding and oxidatively damaged proteins from irreversible aggregation. Plays an important role in the bacterial defense system toward oxidative stress. This Salmonella choleraesuis (strain SC-B67) protein is 33 kDa chaperonin.